The following is a 185-amino-acid chain: Elongation factor P (185 aa).

The protein belongs to the elongation factor P family.

It localises to the cytoplasm. The protein operates within protein biosynthesis; polypeptide chain elongation. Its function is as follows. Involved in peptide bond synthesis. Stimulates efficient translation and peptide-bond synthesis on native or reconstituted 70S ribosomes in vitro. Probably functions indirectly by altering the affinity of the ribosome for aminoacyl-tRNA, thus increasing their reactivity as acceptors for peptidyl transferase. This Caldicellulosiruptor saccharolyticus (strain ATCC 43494 / DSM 8903 / Tp8T 6331) protein is Elongation factor P.